The sequence spans 437 residues: 3-phosphoshikimate 1-carboxyvinyltransferase (437 aa).

Residues Lys-24, Ser-25, and Arg-29 each coordinate 3-phosphoshikimate. Position 24 (Lys-24) interacts with phosphoenolpyruvate. Phosphoenolpyruvate contacts are provided by Gly-95 and Arg-123. 4 residues coordinate 3-phosphoshikimate: Ser-168, Gln-170, Asp-317, and Lys-344. Gln-170 is a phosphoenolpyruvate binding site. The Proton acceptor role is filled by Asp-317. Arg-348 and Arg-390 together coordinate phosphoenolpyruvate.

Belongs to the EPSP synthase family. In terms of assembly, monomer.

Its subcellular location is the cytoplasm. It catalyses the reaction 3-phosphoshikimate + phosphoenolpyruvate = 5-O-(1-carboxyvinyl)-3-phosphoshikimate + phosphate. Its pathway is metabolic intermediate biosynthesis; chorismate biosynthesis; chorismate from D-erythrose 4-phosphate and phosphoenolpyruvate: step 6/7. Its function is as follows. Catalyzes the transfer of the enolpyruvyl moiety of phosphoenolpyruvate (PEP) to the 5-hydroxyl of shikimate-3-phosphate (S3P) to produce enolpyruvyl shikimate-3-phosphate and inorganic phosphate. The protein is 3-phosphoshikimate 1-carboxyvinyltransferase of Wolinella succinogenes (strain ATCC 29543 / DSM 1740 / CCUG 13145 / JCM 31913 / LMG 7466 / NCTC 11488 / FDC 602W) (Vibrio succinogenes).